Consider the following 448-residue polypeptide: Adenylosuccinate synthetase (448 aa).

GTP contacts are provided by residues 22–28 and 50–52; these read GDEGKGK and GHT. Asp-23 (proton acceptor) is an active-site residue. Mg(2+)-binding residues include Asp-23 and Gly-50. Residues 23–26, 48–51, Thr-139, Arg-153, Gln-234, Thr-249, and Arg-321 contribute to the IMP site; these read DEGK and NAGH. The active-site Proton donor is the His-51. 317–323 is a binding site for substrate; that stretch reads SVTGRPR. GTP is bound by residues Arg-323, 349–351, and 431–433; these read KLD and STG.

Belongs to the adenylosuccinate synthetase family. As to quaternary structure, homodimer. Mg(2+) serves as cofactor.

It is found in the cytoplasm. It catalyses the reaction IMP + L-aspartate + GTP = N(6)-(1,2-dicarboxyethyl)-AMP + GDP + phosphate + 2 H(+). It participates in purine metabolism; AMP biosynthesis via de novo pathway; AMP from IMP: step 1/2. Its function is as follows. Plays an important role in the de novo pathway of purine nucleotide biosynthesis. Catalyzes the first committed step in the biosynthesis of AMP from IMP. This Paraburkholderia phytofirmans (strain DSM 17436 / LMG 22146 / PsJN) (Burkholderia phytofirmans) protein is Adenylosuccinate synthetase.